A 138-amino-acid polypeptide reads, in one-letter code: Centromere protein S (138 aa).

Met-1 is subject to N-acetylmethionine. The segment at 112 to 138 (AKKKKKLEDENRNSVESAEAGVEESEN) is disordered.

It belongs to the TAF9 family. CENP-S/MHF1 subfamily. Heterodimer with CENPX, sometimes called MHF; this interaction stabilizes both partners. MHF heterodimers can assemble to form tetrameric structures. MHF also coassemble with CENPT-CENPW heterodimers at centromeres to form the tetrameric CENP-T-W-S-X complex. Forms a discrete complex with FANCM and CENPX, called FANCM-MHF; this interaction, probably mediated by direct binding between CENPS and FANCM, leads to synergistic activation of double-stranded DNA binding and strongly stimulates FANCM-mediated DNA remodeling. Recruited by FANCM to the Fanconi anemia (FA) core complex, which consists of CENPS, CENPX, FANCA, FANCB, FANCC, FANCE, FANCF, FANCG, FANCL, FANCM, FAAP24 and FAAP100. The FA core complex associates with Bloom syndrome (BLM) complex, which consists of at least BLM, DNA topoisomerase 3-alpha (TOP3A), RMI1/BLAP75, RPA1/RPA70 and RPA2/RPA32. The super complex between FA and BLM is called BRAFT. Component of the CENPA-CAD complex, composed of CENPI, CENPK, CENPL, CENPO, CENPP, CENPQ, CENPR and CENPS. The CENPA-CAD complex is probably recruited on centromeres by the CENPA-NAC complex, at least composed of CENPA, CENPC, CENPH, CENPM, CENPN, CENPT and CENPU.

Its subcellular location is the nucleus. The protein localises to the chromosome. It is found in the centromere. It localises to the kinetochore. Functionally, DNA-binding component of the Fanconi anemia (FA) core complex. Required for the normal activation of the FA pathway, leading to monoubiquitination of the FANCI-FANCD2 complex in response to DNA damage, cellular resistance to DNA cross-linking drugs, and prevention of chromosomal breakage. In complex with CENPX (MHF heterodimer), crucial cofactor for FANCM in both binding and ATP-dependent remodeling of DNA. Stabilizes FANCM. In complex with CENPX and FANCM (but not other FANC proteins), rapidly recruited to blocked forks and promotes gene conversion at blocked replication forks. In complex with CENPT, CENPW and CENPX (CENP-T-W-S-X heterotetramer), involved in the formation of a functional kinetochore outer plate, which is essential for kinetochore-microtubule attachment and faithful mitotic progression. As a component of MHF and CENP-T-W-S-X complexes, binds DNA and bends it to form a nucleosome-like structure. DNA-binding function is fulfilled in the presence of CENPX, with the following preference for DNA substates: Holliday junction &gt; double-stranded &gt; splay arm &gt; single-stranded. Does not bind DNA on its own. This Bos taurus (Bovine) protein is Centromere protein S (CENPS).